A 210-amino-acid polypeptide reads, in one-letter code: N-(5'-phosphoribosyl)anthranilate isomerase (210 aa).

This sequence belongs to the TrpF family.

It carries out the reaction N-(5-phospho-beta-D-ribosyl)anthranilate = 1-(2-carboxyphenylamino)-1-deoxy-D-ribulose 5-phosphate. Its pathway is amino-acid biosynthesis; L-tryptophan biosynthesis; L-tryptophan from chorismate: step 3/5. The sequence is that of N-(5'-phosphoribosyl)anthranilate isomerase from Crocosphaera subtropica (strain ATCC 51142 / BH68) (Cyanothece sp. (strain ATCC 51142)).